The following is a 120-amino-acid chain: Putative membrane protein insertion efficiency factor (120 aa).

Residues 93-120 (GRSCQTDVDGANDDWNPASKRGERESFV) are disordered.

This sequence belongs to the UPF0161 family.

The protein localises to the cell membrane. Functionally, could be involved in insertion of integral membrane proteins into the membrane. The sequence is that of Putative membrane protein insertion efficiency factor from Mycobacterium bovis (strain ATCC BAA-935 / AF2122/97).